Consider the following 185-residue polypeptide: NAD(P)H-dependent FAD/FMN reductase GTNG_3158 (185 aa).

Anthranilate 3-monooxygenase consists of a reductase component (GTNG_3158) and an oxygenase component HpaH.

It catalyses the reaction FADH2 + NAD(+) = FAD + NADH + 2 H(+). The catalysed reaction is FADH2 + NADP(+) = FAD + NADPH + 2 H(+). Functionally, involved in the pathway of tryptophan degradation. Reduces FAD/FMN to FADH(2)/FMNH(2), which are subsequently used for the hydroxylation of anthranilate. It can reduce either FAD or flavin mononucleotide (FMN) but prefers FAD. The enzyme has a slight preference for NADPH as acceptor. This Geobacillus thermodenitrificans (strain NG80-2) protein is NAD(P)H-dependent FAD/FMN reductase GTNG_3158.